The chain runs to 338 residues: Lipoate-protein ligase A (338 aa).

Residues 29 to 216 (PATQRVLFLW…AFFAHYGEHV (188 aa)) form the BPL/LPL catalytic domain. Residues arginine 71, 76–79 (GAVF), and lysine 134 contribute to the ATP site. Lysine 134 provides a ligand contact to (R)-lipoate.

The protein belongs to the LplA family. In terms of assembly, monomer.

It localises to the cytoplasm. The enzyme catalyses L-lysyl-[lipoyl-carrier protein] + (R)-lipoate + ATP = N(6)-[(R)-lipoyl]-L-lysyl-[lipoyl-carrier protein] + AMP + diphosphate + H(+). The protein operates within protein modification; protein lipoylation via exogenous pathway; protein N(6)-(lipoyl)lysine from lipoate: step 1/2. It participates in protein modification; protein lipoylation via exogenous pathway; protein N(6)-(lipoyl)lysine from lipoate: step 2/2. Its function is as follows. Catalyzes both the ATP-dependent activation of exogenously supplied lipoate to lipoyl-AMP and the transfer of the activated lipoyl onto the lipoyl domains of lipoate-dependent enzymes. This Escherichia coli O17:K52:H18 (strain UMN026 / ExPEC) protein is Lipoate-protein ligase A.